A 266-amino-acid chain; its full sequence is Eukaryotic translation initiation factor 3 subunit J (266 aa).

2 disordered regions span residues 1–111 (MAPS…EKDA) and 217–266 (NEKM…DDFM). Residues 26 to 44 (DEEEEDVLDSWDAAEDSEV) are compositionally biased toward acidic residues. Residues 40-82 (EDSEVEREKAAKAAEAKAKAEAEAAANKKSKAQRIQEKKAQRK) adopt a coiled-coil conformation. 2 stretches are compositionally biased toward basic and acidic residues: residues 45-61 (EREK…KAEA) and 73-85 (RIQE…KADA). Acidic residues predominate over residues 86–97 (DAEDSDDSDEDE). Composition is skewed to basic and acidic residues over residues 98 to 111 (AERR…EKDA) and 218 to 230 (EKMK…DKGN). Over residues 254–266 (SYDDDGLDDDDFM) the composition is skewed to acidic residues.

This sequence belongs to the eIF-3 subunit J family. Component of the eukaryotic translation initiation factor 3 (eIF-3) complex.

The protein resides in the cytoplasm. In terms of biological role, component of the eukaryotic translation initiation factor 3 (eIF-3) complex, which is involved in protein synthesis of a specialized repertoire of mRNAs and, together with other initiation factors, stimulates binding of mRNA and methionyl-tRNAi to the 40S ribosome. The eIF-3 complex specifically targets and initiates translation of a subset of mRNAs involved in cell proliferation. The sequence is that of Eukaryotic translation initiation factor 3 subunit J (hcr1) from Aspergillus niger (strain ATCC MYA-4892 / CBS 513.88 / FGSC A1513).